Consider the following 155-residue polypeptide: Protein E6 (155 aa).

2 zinc fingers span residues cysteine 33–cysteine 69 and cysteine 106–cysteine 142.

Belongs to the papillomaviridae E6 protein family. Forms homodimers. Interacts with ubiquitin-protein ligase UBE3A/E6-AP; this interaction stimulates UBE3A ubiquitin activity. Interacts with host TP53 and EP300; this interaction inhibits TP53 activity.

Its subcellular location is the host cytoplasm. The protein localises to the host nucleus. In terms of biological role, this protein has transforming activity in vitro. Plays a major role in the induction and maintenance of cellular transformation. E6 associates with host UBE3A/E6-AP ubiquitin-protein ligase and modulates its activity. Sequesters tumor suppressor TP53 in the host cytoplasm and modulates its activity by interacting with host EP300 that results in the reduction of TP53 acetylation and activation. In turn, apoptosis induced by DNA damage is inhibited. E6 also protects host keratinocytes from apoptosis by mediating the degradation of host BAK1. May also inhibit host immune response. In Human papillomavirus 56, this protein is Protein E6.